Here is an 85-residue protein sequence, read N- to C-terminus: Large ribosomal subunit protein bL31B (85 aa).

It belongs to the bacterial ribosomal protein bL31 family. Type B subfamily. Part of the 50S ribosomal subunit.

This chain is Large ribosomal subunit protein bL31B, found in Clavibacter sepedonicus (Clavibacter michiganensis subsp. sepedonicus).